Here is a 500-residue protein sequence, read N- to C-terminus: C6 finger domain transcription factor sirZ (500 aa).

Positions 28–54 form a DNA-binding region, zn(2)-C6 fungal-type; the sequence is CNACHEVKLKCLGGQPCARCRNKQVEC. The span at 79–88 shows a compositional bias: basic and acidic residues; sequence QAKAMSRPEE. Disordered stretches follow at residues 79–168 and 302–332; these read QAKA…EQIS and AGSF…GMYQ. Residues 135–147 show a composition bias toward acidic residues; the sequence is GAEEELLDQEERD. Positions 154–165 are enriched in low complexity; it reads LVENPPNLNPLE. Polar residues predominate over residues 304–316; sequence SFSTSGPGSSQEG. A compositionally biased stretch (low complexity) spans 317 to 328; that stretch reads SHFLSSRHSQSS.

The protein localises to the nucleus. Functionally, transcription factor that regulates sirodesmin production and contributes to virulence. Probably binds to the consensus motif TCGGN(3)CCGA found in the promoters of sirT, sirP, sirO, sirN, sirP, sirB, sirR, sirJ and sirQ. This chain is C6 finger domain transcription factor sirZ, found in Leptosphaeria maculans (Blackleg fungus).